Consider the following 550-residue polypeptide: Methionine--tRNA ligase (550 aa).

The short motif at 13-23 (PYANGPLHFGH) is the 'HIGH' region element. Cysteine 145, cysteine 148, cysteine 158, and cysteine 161 together coordinate Zn(2+). The short motif at 331–335 (QFSKS) is the 'KMSKS' region element. ATP is bound at residue lysine 334.

It belongs to the class-I aminoacyl-tRNA synthetase family. MetG type 1 subfamily. Monomer. Zn(2+) is required as a cofactor.

The protein resides in the cytoplasm. The enzyme catalyses tRNA(Met) + L-methionine + ATP = L-methionyl-tRNA(Met) + AMP + diphosphate. Functionally, is required not only for elongation of protein synthesis but also for the initiation of all mRNA translation through initiator tRNA(fMet) aminoacylation. The polypeptide is Methionine--tRNA ligase (Chlamydia trachomatis serovar A (strain ATCC VR-571B / DSM 19440 / HAR-13)).